Consider the following 188-residue polypeptide: Gamma-glutamylcyclotransferase (188 aa).

19 to 24 lines the substrate pocket; it reads YFAYGS. Residue E98 is the Proton acceptor of the active site. Y139 is a substrate binding site. Phosphoserine is present on S173.

It belongs to the gamma-glutamylcyclotransferase family. In terms of assembly, homodimer.

It carries out the reaction an alpha-(gamma-L-glutamyl)-L-amino acid = 5-oxo-L-proline + an L-alpha-amino acid. In terms of biological role, catalyzes the formation of 5-oxoproline from gamma-glutamyl dipeptides and may play a significant role in glutathione homeostasis. Induces release of cytochrome c from mitochondria with resultant induction of apoptosis. This is Gamma-glutamylcyclotransferase from Homo sapiens (Human).